We begin with the raw amino-acid sequence, 155 residues long: Leader peptidase HopD (155 aa).

Belongs to the peptidase A24 family.

The sequence is that of Leader peptidase HopD (hopD) from Salmonella typhimurium (strain LT2 / SGSC1412 / ATCC 700720).